A 202-amino-acid chain; its full sequence is Large ribosomal subunit protein bL25 (202 aa).

Positions 1-21 (MSKESYELKAEARERVGKGSS) are disordered.

It belongs to the bacterial ribosomal protein bL25 family. CTC subfamily. As to quaternary structure, part of the 50S ribosomal subunit; part of the 5S rRNA/L5/L18/L25 subcomplex. Contacts the 5S rRNA. Binds to the 5S rRNA independently of L5 and L18.

This is one of the proteins that binds to the 5S RNA in the ribosome where it forms part of the central protuberance. This Agrobacterium fabrum (strain C58 / ATCC 33970) (Agrobacterium tumefaciens (strain C58)) protein is Large ribosomal subunit protein bL25.